Reading from the N-terminus, the 371-residue chain is uncharacterized protein (371 aa).

Residues 17 to 33 form a helical membrane-spanning segment; that stretch reads FLLFSVVLIIVMTTLVF.

It to S.pombe SpBC4C3.08 and SpBC4C3.09.

Its subcellular location is the membrane. This is an uncharacterized protein from Schizosaccharomyces pombe (strain 972 / ATCC 24843) (Fission yeast).